Reading from the N-terminus, the 405-residue chain is DNA polymerase processivity factor (405 aa).

Positions 354 to 376 (GAGVKRRASEEEESDQPPKKLFP) are disordered. The Bipartite nuclear localization signal signature appears at 358 to 373 (KRRASEEEESDQPPKK).

It belongs to the herpesviridae DNA polymerase processivity factor family. As to quaternary structure, interacts with the DNA polymerase catalytic subunit. Interacts with the origin-binding protein.

The protein resides in the host nucleus. In terms of biological role, plays an essential role in viral DNA replication by acting as the polymerase accessory subunit. Associates with the viral polymerase to increase its processivity and forms high-affinity direct interactions with DNA. Facilitates the origin-binding protein loading onto DNA thus increasing its ability to assemble into a functional complex capable of unwinding duplex DNA. The chain is DNA polymerase processivity factor from Equine herpesvirus 1 (strain Ab4p) (EHV-1).